The following is a 908-amino-acid chain: SKI/DACH domain-containing protein 1 (908 aa).

The span at 337–353 shows a compositional bias: basic residues; sequence HHHHHHHHHHHHHHHRA. Positions 337 to 461 are disordered; it reads HHHHHHHHHH…SSSGSSQVSV (125 aa). 2 stretches are compositionally biased toward low complexity: residues 370 to 389 and 396 to 410; these read PHLG…SSYS and SDFG…NSVS. Residues 411-429 show a composition bias toward acidic residues; the sequence is SEEEEEEGEEEEEEEEEEG. The span at 449–461 shows a compositional bias: low complexity; that stretch reads ESDSSSGSSQVSV. Residue lysine 688 forms a Glycyl lysine isopeptide (Lys-Gly) (interchain with G-Cter in SUMO2) linkage. Disordered regions lie at residues 744 to 763 and 792 to 818; these read ETPS…TLGS and LQTP…TNEG. Positions 746 to 761 are enriched in polar residues; that stretch reads PSLNPLAQSQGLSCTL.

The protein belongs to the DACH/dachshund family.

In Homo sapiens (Human), this protein is SKI/DACH domain-containing protein 1 (SKIDA1).